The chain runs to 93 residues: Small ribosomal subunit protein uS19 (93 aa).

It belongs to the universal ribosomal protein uS19 family.

In terms of biological role, protein S19 forms a complex with S13 that binds strongly to the 16S ribosomal RNA. This chain is Small ribosomal subunit protein uS19, found in Renibacterium salmoninarum (strain ATCC 33209 / DSM 20767 / JCM 11484 / NBRC 15589 / NCIMB 2235).